Reading from the N-terminus, the 646-residue chain is Hypoxia up-regulated protein 1 (646 aa).

The first 22 residues, 1 to 22 (MRPLVCVLWMFLFALLSSHTES), serve as a signal peptide directing secretion. The disordered stretch occupies residues 572–646 (LFGGGSSVSE…KEEEKAEPQE (75 aa)). The span at 590 to 610 (VQEEDEVPTEPTKEEEQESAD) shows a compositional bias: acidic residues. The span at 611–646 (PADKQQDKENNKEKGTSATNEKEEGKKEEEKAEPQE) shows a compositional bias: basic and acidic residues.

Belongs to the heat shock protein 70 family.

It localises to the endoplasmic reticulum lumen. Has a pivotal role in cytoprotective cellular mechanisms triggered by oxygen deprivation. May play a role as a molecular chaperone and participate in protein folding. This is Hypoxia up-regulated protein 1 (hyou1) from Xenopus laevis (African clawed frog).